The chain runs to 134 residues: Thyrotropin subunit beta (134 aa).

An N-terminal signal peptide occupies residues 1-16; that stretch reads MSPFFMMSLLFGLTFG. Disulfide bonds link C22–C72, C36–C87, C39–C125, C47–C103, C51–C105, and C108–C115. The N-linked (GlcNAc...) asparagine glycan is linked to N43.

Belongs to the glycoprotein hormones subunit beta family. Heterodimer of a common alpha chain and a unique beta chain which confers biological specificity to thyrotropin, lutropin, follitropin and gonadotropin.

The protein resides in the secreted. Indispensable for the control of thyroid structure and metabolism. The polypeptide is Thyrotropin subunit beta (TSHB) (Gallus gallus (Chicken)).